The following is a 113-amino-acid chain: Hydrogenase maturation factor HypA (113 aa).

Histidine 2 lines the Ni(2+) pocket. Positions 73, 76, 89, and 92 each coordinate Zn(2+).

The protein belongs to the HypA/HybF family.

Functionally, involved in the maturation of [NiFe] hydrogenases. Required for nickel insertion into the metal center of the hydrogenase. This Picosynechococcus sp. (strain ATCC 27264 / PCC 7002 / PR-6) (Agmenellum quadruplicatum) protein is Hydrogenase maturation factor HypA.